A 243-amino-acid polypeptide reads, in one-letter code: Sec-independent protein translocase protein TatC (243 aa).

Transmembrane regions (helical) follow at residues 18 to 38, 70 to 90, 106 to 126, 132 to 152, 153 to 173, 191 to 211, and 213 to 233; these read VIII…NYVD, IAII…IWSF, MIPV…FTVF, FLLQ…KYIS, FALN…VVYI, YALL…DVIS, and LLMA…AKFI.

This sequence belongs to the TatC family. In terms of assembly, forms a complex with TatA.

It localises to the cell membrane. Its function is as follows. Part of the twin-arginine translocation (Tat) system that transports large folded proteins containing a characteristic twin-arginine motif in their signal peptide across membranes. This Carboxydothermus hydrogenoformans (strain ATCC BAA-161 / DSM 6008 / Z-2901) protein is Sec-independent protein translocase protein TatC.